We begin with the raw amino-acid sequence, 661 residues long: Lateral signaling target protein 2 (661 aa).

Residues 294 to 432 form a disordered region; that stretch reads VPEDTSSTLT…SDDEITDDVQ (139 aa). A compositionally biased stretch (polar residues) spans 297 to 310; that stretch reads DTSSTLTMSDFRTN. Low complexity-rich tracts occupy residues 330-360 and 381-393; these read SDST…SPHS and TNSN…TESP. Over residues 394–411 the composition is skewed to acidic residues; that stretch reads ETIEEPDNVDMEESSESE. The span at 412–422 shows a compositional bias: basic and acidic residues; it reads VDTHIDETRNE. The segment at 566 to 626 adopts an FYVE-type zinc-finger fold; that stretch reads DEDCEQCTAC…VCNLCYVHRL (61 aa). 8 residues coordinate Zn(2+): C572, C575, C588, C591, C596, C599, C618, and C621. Residues 641-650 show a composition bias toward polar residues; the sequence is NGATVPSVTE. Residues 641–661 form a disordered region; the sequence is NGATVPSVTEQQSAQTASASS. The span at 651 to 661 shows a compositional bias: low complexity; it reads QQSAQTASASS.

This sequence belongs to the lst-2 family. As to expression, expressed in vulval precursor cells (VPCs).

Negative regulator of epidermal growth factor receptor (EGFR) signaling. The polypeptide is Lateral signaling target protein 2 (lst-2) (Caenorhabditis elegans).